The sequence spans 612 residues: MVQKQYRFAPKSIFTFVFLCFVAIVVIISTSSLVQVEESLDPIEVSDEIKKHDRKVVIFPSNFQSANNKLADFLTEAFGQRLNKGDIVYKNRDTYELPQTVYTWNTIDLFQSIGEKDNLKCEKIPLNFEISKIYNKNADLYKILRDFKNENSFYYKEVSVFFPDLGKQLRERTIEKHWFQLIGSSVWLEQYGVHLMISRVIYTKTGNKVQPVISLSYVQAFDRNWTELKNVTLVVPDSGKAKFKTVSYPSFIPIPVYHNVNQQRGKFYGVEDPRIMLVKNKEGYEEPLIVYNSFNRSPPNANYLEEIKNLVKLDTYRSIFMAWIWRTQLGKSNVGSSLPDLATTDDHKYVKVKELSLPNKKRPKTEKNWTPFVIYEDQKKQGYDSHLYFIYSFQDLSILKCSLWDAGNCIWEYRMNNKKTKISELRGGTELMNVNQLLDKYNFAGLETVKDQFKGKEVWISFARAALSKCGCGSKMYRPNFTVLVKQGGRFQLSFVSSYMDFGVPILPWAKGKGLCNGKNLLIPNGISNWVLAKDEGGGFQDYMTLSLSRSDSTVDIIHMKGILKSILSEYLLQTNRDVLNNNAIHCALLESESYCKSYAENYRAHLKRWQN.

Over 1–12 (MVQKQYRFAPKS) the chain is Cytoplasmic. A helical membrane pass occupies residues 13-33 (IFTFVFLCFVAIVVIISTSSL). Topologically, residues 34–612 (VQVEESLDPI…YRAHLKRWQN (579 aa)) are extracellular. N224, N230, and N480 each carry an N-linked (GlcNAc...) asparagine glycan.

Belongs to the BMT family.

It localises to the membrane. In terms of biological role, beta-mannosyltransferase involved in cell wall biosynthesis. Required for beta-1,2-mannose transfer on phospholipomannan. The polypeptide is Beta-mannosyltransferase 5 (BMT5) (Candida albicans (strain SC5314 / ATCC MYA-2876) (Yeast)).